The following is a 396-amino-acid chain: Elongation factor Tu (396 aa).

A tr-type G domain is found at 10-206; sequence KPHLNIGTIG…AVDENVPDPV (197 aa). Residues 19-26 are G1; it reads GHVDHGKT. 19-26 provides a ligand contact to GTP; it reads GHVDHGKT. Thr-26 contributes to the Mg(2+) binding site. The G2 stretch occupies residues 62–66; sequence GITIN. A G3 region spans residues 83 to 86; sequence DAPG. Residues 83–87 and 138–141 contribute to the GTP site; these read DAPGH and NKSD. The G4 stretch occupies residues 138–141; it reads NKSD. Residues 176–178 form a G5 region; the sequence is SAL.

Belongs to the TRAFAC class translation factor GTPase superfamily. Classic translation factor GTPase family. EF-Tu/EF-1A subfamily. Monomer.

The protein localises to the cytoplasm. The catalysed reaction is GTP + H2O = GDP + phosphate + H(+). Its function is as follows. GTP hydrolase that promotes the GTP-dependent binding of aminoacyl-tRNA to the A-site of ribosomes during protein biosynthesis. This chain is Elongation factor Tu, found in Kocuria rhizophila (strain ATCC 9341 / DSM 348 / NBRC 103217 / DC2201).